The chain runs to 542 residues: Gamma-terpinene synthase 1 (542 aa).

Mn(2+) is bound by residues D295 and D299. Residues 295 to 299 (DDVYD) carry the DDXXD motif motif. Homodimerization regions lie at residues 301 to 307 (YDTLDEL) and 373 to 410 (EAKWYYAGYTPTLAEYLENAKVSISSPTIISQVYFTLP). Mn(2+)-binding residues include D439 and E447.

This sequence belongs to the terpene synthase family. In terms of assembly, homodimer. It depends on Mn(2+) as a cofactor. The cofactor is Mg(2+). As to expression, mostly expressed in flowers and, to a lower extent, in leaves, especially in glandular trichomes.

The catalysed reaction is (2E)-geranyl diphosphate = gamma-terpinene + diphosphate. It carries out the reaction (2E)-geranyl diphosphate = alpha-terpinene + diphosphate. It functions in the pathway secondary metabolite biosynthesis; terpenoid biosynthesis. Its function is as follows. Involved in the biosynthesis of phenolic monoterpenes natural products thymol and carvacrol which have a broad range of biological activities acting as antimicrobial compounds, insecticides, antioxidants and pharmaceutical agents. Monoterpene synthase which catalyzes the conversion of geranyl diphosphate (GPP) to gamma-terpinene and the minor products alpha-thujene, alpha-terpinene, myrcene, sabinene, (+)-R-limonene, alpha-pinene and alpha-phellandrene. The polypeptide is Gamma-terpinene synthase 1 (Thymus vulgaris (Thyme)).